Consider the following 91-residue polypeptide: C-C motif chemokine 5 (91 aa).

A signal peptide spans 1–23 (MKVSAARLAVILVATALCAPASA). 2 disulfide bridges follow: cysteine 33-cysteine 57 and cysteine 34-cysteine 73.

This sequence belongs to the intercrine beta (chemokine CC) family.

The protein localises to the secreted. Functionally, chemoattractant for blood monocytes, memory T-helper cells and eosinophils. Causes the release of histamine from basophils and activates eosinophils. May activate several chemokine receptors including CCR1, CCR3, CCR4 and CCR5. May also be an agonist of the G protein-coupled receptor GPR75. Together with GPR75, may play a role in neuron survival through activation of a downstream signaling pathway involving the PI3, Akt and MAP kinases. By activating GPR75 may also play a role in insulin secretion by islet cells. The protein is C-C motif chemokine 5 (CCL5) of Macaca mulatta (Rhesus macaque).